The chain runs to 415 residues: Peptide chain release factor subunit 1-1 (415 aa).

Belongs to the eukaryotic release factor 1 family. As to quaternary structure, heterodimer of two subunits, one of which binds GTP.

It is found in the cytoplasm. In terms of biological role, directs the termination of nascent peptide synthesis (translation) in response to the termination codons UAA, UAG and UGA. This Methanosarcina acetivorans (strain ATCC 35395 / DSM 2834 / JCM 12185 / C2A) protein is Peptide chain release factor subunit 1-1.